The following is a 122-amino-acid chain: Alkene monooxygenase system, ferredoxin component (122 aa).

The 96-residue stretch at Val-16 to Ile-111 folds into the Rieske domain. [2Fe-2S] cluster-binding residues include Cys-55, His-57, Cys-75, and His-78.

The protein belongs to the bacterial ring-hydroxylating dioxygenase ferredoxin component family. As to quaternary structure, homodimer. The alkene monooxygenase multicomponent enzyme system is composed of an electron transfer component and a monooxygenase component interacting with the effector protein XamoD. The electron transfer component is composed of a ferredoxin reductase (XamoF) and a ferredoxin (XamoC), and the monooxygenase component is formed by a heterohexamer (dimer of heterotrimers) of two alpha subunits (XamoA), two beta subunits (XamoE) and two gamma subunits (XamoB). Requires [2Fe-2S] cluster as cofactor.

It localises to the cytoplasm. Ferredoxin component of the alkene monooxygenase multicomponent enzyme system which catalyzes the O2- and NADH-dependent epoxidation of short chain (C2 to C6) alkenes to their corresponding epoxides. Functions as an intermediate electron transfer protein. The chain is Alkene monooxygenase system, ferredoxin component from Xanthobacter autotrophicus (strain ATCC BAA-1158 / Py2).